A 287-amino-acid polypeptide reads, in one-letter code: MDKIKIALQYIMPKHLLSRLVGKLAAAQMGSVTTAAINWFIKQYKIDMSEAAQSEATAYASFNDFFTRALKPGIRPLCEDNDYIVHPVDGAVSQLGPIKEGRIFQAKGHDYSSLALLGDQADDAKRFEGGDFATIYLAPKDYHRIHMPIKGTLSKMTYVPGELFSVNPLTAENVPGLFARNERVVAIFETEIGPMAMVLVGATIVASIETVWAGTVTPPTGKKVFTWDYPTEGPNALTLEKGAEMGRFKLGSTVVMLFAKDALDKFADGVEPKSVTRMGQAFAKIED.

Catalysis depends on charge relay system; for autoendoproteolytic cleavage activity residues Asp89, His146, and Ser252. Ser252 functions as the Schiff-base intermediate with substrate; via pyruvic acid; for decarboxylase activity in the catalytic mechanism. Residue Ser252 is modified to Pyruvic acid (Ser); by autocatalysis.

It belongs to the phosphatidylserine decarboxylase family. PSD-B subfamily. Prokaryotic type I sub-subfamily. In terms of assembly, heterodimer of a large membrane-associated beta subunit and a small pyruvoyl-containing alpha subunit. It depends on pyruvate as a cofactor. In terms of processing, is synthesized initially as an inactive proenzyme. Formation of the active enzyme involves a self-maturation process in which the active site pyruvoyl group is generated from an internal serine residue via an autocatalytic post-translational modification. Two non-identical subunits are generated from the proenzyme in this reaction, and the pyruvate is formed at the N-terminus of the alpha chain, which is derived from the carboxyl end of the proenzyme. The autoendoproteolytic cleavage occurs by a canonical serine protease mechanism, in which the side chain hydroxyl group of the serine supplies its oxygen atom to form the C-terminus of the beta chain, while the remainder of the serine residue undergoes an oxidative deamination to produce ammonia and the pyruvoyl prosthetic group on the alpha chain. During this reaction, the Ser that is part of the protease active site of the proenzyme becomes the pyruvoyl prosthetic group, which constitutes an essential element of the active site of the mature decarboxylase.

It is found in the cell membrane. The enzyme catalyses a 1,2-diacyl-sn-glycero-3-phospho-L-serine + H(+) = a 1,2-diacyl-sn-glycero-3-phosphoethanolamine + CO2. It functions in the pathway phospholipid metabolism; phosphatidylethanolamine biosynthesis; phosphatidylethanolamine from CDP-diacylglycerol: step 2/2. Its function is as follows. Catalyzes the formation of phosphatidylethanolamine (PtdEtn) from phosphatidylserine (PtdSer). The sequence is that of Phosphatidylserine decarboxylase proenzyme from Shewanella pealeana (strain ATCC 700345 / ANG-SQ1).